The chain runs to 822 residues: Valine--tRNA ligase (822 aa).

The short motif at 41 to 51 (PNVTGQLHLGH) is the 'HIGH' region element. A 'KMSKS' region motif is present at residues 511–515 (KMSKS). Lys-514 contributes to the ATP binding site. Positions 765–822 (EQKGRELKEIQFLKSEILRAEKILTNKGFLEKAPREKIDLERTKLEKLKEKLAFYEKK) form a coiled coil.

This sequence belongs to the class-I aminoacyl-tRNA synthetase family. ValS type 1 subfamily. Monomer.

The protein localises to the cytoplasm. The catalysed reaction is tRNA(Val) + L-valine + ATP = L-valyl-tRNA(Val) + AMP + diphosphate. In terms of biological role, catalyzes the attachment of valine to tRNA(Val). As ValRS can inadvertently accommodate and process structurally similar amino acids such as threonine, to avoid such errors, it has a 'posttransfer' editing activity that hydrolyzes mischarged Thr-tRNA(Val) in a tRNA-dependent manner. This Mesomycoplasma hyopneumoniae (strain 7448) (Mycoplasma hyopneumoniae) protein is Valine--tRNA ligase.